Here is a 182-residue protein sequence, read N- to C-terminus: Epididymal-specific lipocalin-10 (182 aa).

Residues methionine 1–threonine 19 form the signal peptide. 2 N-linked (GlcNAc...) asparagine glycosylation sites follow: asparagine 31 and asparagine 144. Cysteine 85 and cysteine 176 are disulfide-bonded. An N6-acetyllysine modification is found at lysine 165.

It belongs to the calycin superfamily. Lipocalin family. In terms of tissue distribution, expressed in epididymis.

It is found in the secreted. In terms of biological role, may play a role in male fertility. May act as a retinoid carrier protein within the epididymis. The protein is Epididymal-specific lipocalin-10 (Lcn10) of Mus musculus (Mouse).